Reading from the N-terminus, the 1914-residue chain is Zinc finger protein Rlf (1914 aa).

Serine 41 is subject to Phosphoserine. The segment covering 521-540 (KQYRRRDLTDQHKEKRDKKP) has biased composition (basic and acidic residues). Residues 521–541 (KQYRRRDLTDQHKEKRDKKPI) are disordered. The C2H2-type 1 zinc finger occupies 582 to 604 (YTCPVCIKKFKRKEMFVPHVMEH). A Glycyl lysine isopeptide (Lys-Gly) (interchain with G-Cter in SUMO2) cross-link involves residue lysine 622. Phosphoserine is present on residues serine 632 and serine 634. 5 C2H2-type zinc fingers span residues 671-696 (YPCPGTDCSRVFKQFKYLSVHLKAEH), 714-736 (EKCTYCRRHFMSAFHLREHEQVH), 742-766 (YMCVSIDCYARFGSVNELLNHKQKH), 771-795 (YKCELNGCNIVFSDLGQLYHHEAQH), and 801-825 (YTCNFLGCKKFYYSKIEYQNHLSMH). Lysine 839 participates in a covalent cross-link: Glycyl lysine isopeptide (Lys-Gly) (interchain with G-Cter in SUMO2). The interval 882 to 907 (TETAENLKENSDSNSSDQLSHSSSAS) is disordered. Residues 893–907 (DSNSSDQLSHSSSAS) are compositionally biased toward low complexity. A C2H2-type 7 zinc finger spans residues 954–979 (FTCGFDGCGSTYKNARGMQKHLRKVH). Residues 993–1028 (LFPSLGNEHNQTTEKLDAEPKPCSDTNSDSPDEGLD) form a disordered region. Positions 1003-1014 (QTTEKLDAEPKP) are enriched in basic and acidic residues. 2 C2H2-type zinc fingers span residues 1127-1152 (FFCELQGCKYEFVTREALLMHYLKKH) and 1172-1195 (FQCHICQRSFTRKTHLRIHYKNKH). The tract at residues 1231-1290 (LGGDPSSNSEKPHCHPKKDECSSETDLESSCEETESKTSDISSPIGSHREEQEGREGRGS) is disordered. Residues 1240 to 1251 (EKPHCHPKKDEC) are compositionally biased toward basic and acidic residues. A compositionally biased stretch (acidic residues) spans 1252–1263 (SSETDLESSCEE). A compositionally biased stretch (basic and acidic residues) spans 1277–1289 (SHREEQEGREGRG). 5 consecutive C2H2-type zinc fingers follow at residues 1310–1335 (FHCIHKTCNSSFTNLKGLIRHYRTVH), 1362–1387 (FACKYKECNKRFLCSKALAKHCSDSH), 1407–1432 (FSCNQPQCPAVFYTFNKLKHHLMEQH), 1444–1469 (IHCDLNGCGQIFTHRSNYSQHVYYRH), and 1549–1574 (YPCMVQGCLSVVKLESSIVRHYKRTH). A Glycyl lysine isopeptide (Lys-Gly) (interchain with G-Cter in SUMO2) cross-link involves residue lysine 1423. Glycyl lysine isopeptide (Lys-Gly) (interchain with G-Cter in SUMO2) cross-links involve residues lysine 1599 and lysine 1611. The segment at 1620 to 1654 (SERTEHSHSPGDSSAPIQNTDCCHSSERDGGQKGC) is disordered. The span at 1629–1642 (PGDSSAPIQNTDCC) shows a compositional bias: polar residues. Lysine 1696 is covalently cross-linked (Glycyl lysine isopeptide (Lys-Gly) (interchain with G-Cter in SUMO2)). The tract at residues 1725–1757 (ESETRQHSSGQENTVKNPTHVPKENFRKHSQPR) is disordered. Polar residues predominate over residues 1731 to 1741 (HSSGQENTVKN). Lysine 1762 is covalently cross-linked (Glycyl lysine isopeptide (Lys-Gly) (interchain with G-Cter in SUMO2)). The disordered stretch occupies residues 1783-1807 (KEDDFDDWEPSEHLTLSNSSQSSND). The segment covering 1796 to 1807 (LTLSNSSQSSND) has biased composition (polar residues).

It belongs to the krueppel C2H2-type zinc-finger protein family. Interacts with RIT1 and RIT2. In terms of tissue distribution, widely expressed in fetal and adult tissues.

The protein resides in the nucleus. In terms of biological role, may be involved in transcriptional regulation. The sequence is that of Zinc finger protein Rlf (RLF) from Homo sapiens (Human).